Here is a 520-residue protein sequence, read N- to C-terminus: Developmental regulatory protein wetA (520 aa).

Disordered stretches follow at residues 110-149, 260-294, 388-453, and 471-496; these read ATHALSTSPSTPPATPRRKPTQSALITPKSIRHRCPNERR, HPSSSTLTNSSPSSADDMFSSSHSSDPHSLSSWQS, TTSQ…GSNK, and LTGVAPSGSSKTKARREQEARDRRRK. Over residues 261 to 294 the composition is skewed to low complexity; it reads PSSSTLTNSSPSSADDMFSSSHSSDPHSLSSWQS. Residues 388–401 are compositionally biased toward polar residues; it reads TTSQVHNVSRSPSL. Residues 420-429 show a composition bias toward basic residues; sequence PVHRRTHSRK. The span at 436–453 shows a compositional bias: low complexity; the sequence is NAPKPAKASGSSSRGSNK.

This sequence belongs to the wetA family.

Its function is as follows. BrlA, abaA and wetA are pivotal regulators of conidiophore development and conidium maturation. They act individually and together to regulate their own expression and that of numerous other sporulation-specific genes. Plays a crucial role in pigmentation and conidial cell wall integrity. This chain is Developmental regulatory protein wetA, found in Penicillium digitatum (strain PHI26 / CECT 20796) (Green mold).